A 386-amino-acid polypeptide reads, in one-letter code: MELIRIAMKKDLENDNSLMNKWATVAGLKNPNPLYDFLNHDGKTFNEFSSIVNIVKSQYPDREYELMKDYCLNLDVKTKAARSALEYADANMFFEIEDVLIDSMISCSNMKSKEYGKVYKIHRELSNSVITEFEAVKRLGKLNIKTPEMNSFSRLLLLYHYLSTGNFSPMAQLIKQIDLSEISENMYIRNTYQTRVHVLMSNIKLNENSLEECREYSKKALESTNILRFQVFSYLTIGNSLLFSNYELAQENFLKGLSISVQNENYNMIFQQALCFLNNVWRKENKWINFESDSIMDLQEQAHCFINFNENSKAKEVLDKLDLLVHNDNELAMHYYLKGRLEQNKACFYSSIEYFKKSNDKFLIRLPLLELQKMGENQKLLELLLL.

As to quaternary structure, homodimer. Interacts with the viral arbitrium peptide, this interaction changes the oligomeric state of AimR from an active dimer to an inactive monomer leading to lysogeny.

Its function is as follows. Transcriptional regulator which is part of the latency-replication switch system that decides at the onset of infection whether to replicate and lyse the host or to lysogenize (latency) and keep the host viable. Activates the transcription of the aimX locus. Transcriptional activation of aimX seems to lead to the productive viral replication (lytic cycle), aimX possibly acting as a regulatory non-coding RNA. The polypeptide is AimR transcriptional regulator (Bacillus pumilus (Bacillus mesentericus)).